The sequence spans 1240 residues: Ubiquitin carboxyl-terminal hydrolase 36 (1240 aa).

Disordered stretches follow at residues 37 to 56 and 100 to 144; these read AKTS…STDN and SNGG…GTSA. Composition is skewed to low complexity over residues 47–56 and 101–132; these read SSTSGSSTDN and NGGA…DNNG. The region spanning 202 to 512 is the USP domain; sequence TGMLNVGNTC…NAYIMFYELD (311 aa). The Nucleophile role is filled by C211. H471 (proton acceptor) is an active-site residue. Residues 637–705 form a disordered region; that stretch reads ANKSSCNTLN…KMFEESSESV (69 aa). The span at 639 to 649 shows a compositional bias: polar residues; it reads KSSCNTLNNSK. Over residues 650–662 the composition is skewed to low complexity; that stretch reads QHQPQQQQQQPQH. Residues 668-680 are compositionally biased toward acidic residues; it reads SDEEEDSDDDNDN. The residue at position 715 (T715) is a Phosphothreonine. Disordered regions lie at residues 723 to 818, 831 to 998, 1076 to 1163, and 1198 to 1240; these read YESA…KQKT, YKNK…GESL, DMSS…EYES, and RFAG…QQQS. A phosphoserine mark is found at S725 and S727. A compositionally biased stretch (low complexity) spans 733-744; sequence QQQQQQQTLQQQ. The span at 759 to 769 shows a compositional bias: acidic residues; the sequence is SDTDDDDDEEQ. The segment covering 794–815 has biased composition (low complexity); sequence NSSSSKTKSASNASSANVNSSK. The span at 843–859 shows a compositional bias: acidic residues; the sequence is DDDDDDDEDEDEDEDEA. The segment covering 869–879 has biased composition (low complexity); sequence TKSSSSSSSTS. Positions 880–890 are enriched in polar residues; that stretch reads LTNGWQQSQNG. A Phosphoserine modification is found at S895. T898 carries the post-translational modification Phosphothreonine. At S901 the chain carries Phosphoserine. The span at 918–941 shows a compositional bias: acidic residues; it reads DEDDDENVDGVADADDDDDNDEVA. The span at 976–988 shows a compositional bias: polar residues; the sequence is LNGSSKSQQTTPR. The span at 1076 to 1103 shows a compositional bias: low complexity; sequence DMSSSSSSSSSTNSSSNSSSRSNGNSSN. Over residues 1111–1120 the composition is skewed to basic and acidic residues; it reads AEAREQRKRD. Low complexity predominate over residues 1231–1240; sequence QSSGQQQQQS.

The protein belongs to the peptidase C19 family. As to quaternary structure, interacts with atms/PAF1, but not with CycT.

The protein localises to the nucleus. It is found in the nucleolus. It catalyses the reaction Thiol-dependent hydrolysis of ester, thioester, amide, peptide and isopeptide bonds formed by the C-terminal Gly of ubiquitin (a 76-residue protein attached to proteins as an intracellular targeting signal).. In terms of biological role, required for maintaining multiple types of adult stem cells, including male and female germline, epithelial follicle cell and intestinal stem cells. May function as a transcriptional repressor by continually deubiquiting histone H2B at the promoters of genes critical for cellular differentiation, thereby preventing histone H3 'Lys-4' trimethylation (H3K4). Controls selective autophagy activation by ubiquitinated proteins. The sequence is that of Ubiquitin carboxyl-terminal hydrolase 36 (Usp36) from Drosophila grimshawi (Hawaiian fruit fly).